The primary structure comprises 43 residues: Kappa-actitoxin-Avd4p (43 aa).

Cystine bridges form between Cys4–Cys39, Cys6–Cys32, and Cys22–Cys40.

The protein localises to the secreted. It is found in the nematocyst. In terms of biological role, blocks Kv3 voltage-gated potassium channels. Reduces blood pressure. The chain is Kappa-actitoxin-Avd4p from Anemonia viridis (Snakelocks anemone).